A 272-amino-acid chain; its full sequence is 3-methyl-2-oxobutanoate hydroxymethyltransferase (272 aa).

Mg(2+) is bound by residues Asp-51 and Asp-90. 3-methyl-2-oxobutanoate contacts are provided by residues 51-52 (DS), Asp-90, and Lys-120. Glu-122 serves as a coordination point for Mg(2+). The active-site Proton acceptor is Glu-189.

It belongs to the PanB family. Homodecamer; pentamer of dimers. It depends on Mg(2+) as a cofactor.

Its subcellular location is the cytoplasm. The catalysed reaction is 3-methyl-2-oxobutanoate + (6R)-5,10-methylene-5,6,7,8-tetrahydrofolate + H2O = 2-dehydropantoate + (6S)-5,6,7,8-tetrahydrofolate. It participates in cofactor biosynthesis; (R)-pantothenate biosynthesis; (R)-pantoate from 3-methyl-2-oxobutanoate: step 1/2. Catalyzes the reversible reaction in which hydroxymethyl group from 5,10-methylenetetrahydrofolate is transferred onto alpha-ketoisovalerate to form ketopantoate. The protein is 3-methyl-2-oxobutanoate hydroxymethyltransferase of Syntrophus aciditrophicus (strain SB).